The following is a 359-amino-acid chain: Membrane-bound lytic murein transglycosylase C (359 aa).

A signal peptide spans 1–16 (MKKYLALALIAPLLIS). The N-palmitoyl cysteine moiety is linked to residue Cys-17. Cys-17 carries S-diacylglycerol cysteine lipidation.

The protein belongs to the transglycosylase Slt family.

The protein localises to the cell outer membrane. The enzyme catalyses Exolytic cleavage of the (1-&gt;4)-beta-glycosidic linkage between N-acetylmuramic acid (MurNAc) and N-acetylglucosamine (GlcNAc) residues in peptidoglycan, from either the reducing or the non-reducing ends of the peptidoglycan chains, with concomitant formation of a 1,6-anhydrobond in the MurNAc residue.. Its function is as follows. Murein-degrading enzyme. May play a role in recycling of muropeptides during cell elongation and/or cell division. The sequence is that of Membrane-bound lytic murein transglycosylase C from Escherichia coli (strain SMS-3-5 / SECEC).